The sequence spans 681 residues: Cryptochrome-1 (681 aa).

A CNT1, binds chromophores to sense blue light and mediate CRY dimerization region spans residues 1–489 (MSGSVSGCGS…AKARLHEALS (489 aa)). A Photolyase/cryptochrome alpha/beta domain is found at 12–141 (GCSIVWFRRD…AVRSFNADLL (130 aa)). Cys-80 and Cys-190 form a disulfide bridge. An FAD-binding site is contributed by Tyr-235. Position 238 (Asn-238) interacts with Mg(2+). Arg-239 serves as a coordination point for ATP. Residues Lys-241, Ser-244, and Thr-246 each contribute to the Mg(2+) site. Residues 247-251 (TSFLS) and Ser-293 each bind FAD. His-358 is a binding site for Mg(2+). FAD is bound by residues Asp-359 and 390–392 (DAD). Position 359-360 (359-360 (DR)) interacts with ATP. Position 409 (Asp-409) interacts with ATP. Residues 490 to 681 (QMWQLEAASR…LNWRRLSQTG (192 aa)) are CCT1/CCE1, mediates blue light signaling. Disordered regions lie at residues 525 to 598 (RDIT…EPAS) and 616 to 664 (STED…TSSY). A compositionally biased stretch (polar residues) spans 583–598 (MVNTNQAQQRRAEPAS). Position 616 is a phosphoserine (Ser-616). Thr-621 is subject to Phosphothreonine.

The protein belongs to the DNA photolyase class-1 family. As to quaternary structure, homodimer. Interacts with ADO1, COP1 and PHYA. Interacts specifically with the dark/far-red (Pr) state of PHYB, but not with the red light-activated (Pfr). Interacts with PIF4 and PIF5 in the nucleus in response to low blue light (LBL). Binds to SPA1 and SPA4 in response to blue light, this interaction prevents SPA1/COP1 complex formation and thus avoid COP1-dependent degradation of the transcription factor HY5 by the proteasome and promotes hypocotyl elongation. Interacts with TCP2. Binding to ATP mediates conformational changes which facilitate flavin binding. FAD serves as cofactor. (6R)-5,10-methylene-5,6,7,8-tetrahydrofolate is required as a cofactor. Autophosphorylated; in response to blue light and when in complex with FAD cofactor. Kinase activity is optimal in the presence of magnesium ions, about 30 percent of the optimal activity in the presence of manganese ions, but inactive with calcium ions. Adopts an open conformation when phosphorylated upon photoexcitation and thus interacts with signaling partner proteins. In terms of tissue distribution, widely expressed. Expressed in the aerial tissues (e.g. cotyledons and leaf primordia), but not detected in the roots.

It localises to the cytoplasm. The protein resides in the nucleus. The protein localises to the PML body. Its activity is regulated as follows. Light exposure induces a conformational change in the C-terminal domain CCT1 required for activity. Its function is as follows. Photoreceptor that mediates primarily blue light inhibition of hypocotyl elongation and photoperiodic control of floral initiation, and regulates other light responses, including circadian rhythms, tropic growth, stomata opening, guard cell development, root development, bacterial and viral pathogen responses, abiotic stress responses, cell cycles, programmed cell death, apical dominance, fruit and ovule development, seed dormancy, and magnetoreception. Photoexcited cryptochromes interact with signaling partner proteins to alter gene expression at both transcriptional and post-translational levels and, consequently, regulate the corresponding metabolic and developmental programs. Blue-light absorbing flavoprotein that activates reversible flavin photoreduction via an electron transport chain comprising a tryptophan triad (W-324, W-377 and W-400), accompanied by a large conformational change upon photoexcitation, or via an alternative electron transport that involves small metabolites, including NADPH, NADH, and ATP. The half-life of the activated signaling state is about 5 minutes. Also involved in the detection of blue/green ratio in light (shade under leaf canopies) and subsequent adaptations on plant growth and development. In darkness, the dark reoxidation of flavin occurs and leads to inactivated state. Perceives low blue light (LBL) and responds by directly contacting two bHLH transcription factors, PIF4 and PIF5, at chromatin on E-box variant 5'-CA[CT]GTG-3' to promote their activity and stimulate specific gene expression to adapt global physiology (e.g. hypocotyl elongation and hyponastic growth in low blue light). When activated by high-intensity blue light, catalyzes direct enzymatic conversion of molecular oxygen O(2) to reactive oxygen species (ROS) and hydrogen peroxide H(2)O(2) in vitro. ROS accumulation upon activation by blue light leads to cell death in protoplasts. Seems essential for blue-light-triggered and singlet oxygen-mediated programmed cell death (PCD). Required for the induction of nuclear genes encoding photoprotective components by GATA24 and GATA28 in extreme light intensities that exceed the electron utilization capacity of the chloroplast. Involved in shortening the circadian clock period, especially at 27 degrees Celsius, in blue light (BL) and required to maintain clock genes expression rhythm. Mediates blue light-induced gene expression and hypocotyl elongation through the inhibition of COP1-mediated degradation of the transcription factors BIT1 and HY5 and via the activation of anion channels at the plasma membrane, probably via auxin signaling. Required for the hypocotyl hook formation in darkness. Involved in blue light-dependent stomatal opening, CHS gene expression, transpiration, inhibition of stem growth and increase of root growth, probably by regulating abscisic acid (ABA). Prevents lateral roots growth by inhibiting auxin transport. Necessary for shade avoidance syndrome (SAS), characterized by leaf hyponasty and reduced lamina/petiole ratio, when exposed to blue light attenuation. Together with phototropins, involved in phototropism regulation by various blue light fluence; blue light attenuates phototropism in high fluence rates (100 umol.m-2.s-1) but enhances phototropism in low fluence rates (&lt;1.0 umol.m-2.s-1). Required for blue/UV-A wavelengths-mediated inhibition of explants shoot regeneration in vitro (e.g. new shoot apical meristems regeneration from excised cotyledons). Modulates anthocyanin accumulation in a PHYA-dependent manner in far-red-light. Acts as a PHYA/PHYB-dependent modulator of chlorophyll accumulation in red light. Contributes to most blue light deetiolation responses. May act as a chemical magnetoreceptor, via magnetically sensitive kinetics and quantum yields of photo-induced flavin / tryptophan radical pairs. The effect of near-null magnetic field on flowering is altered by changes of blue light cycle and intensity in a CRY1/CRY2-dependent manner. Involved in the strigolactone signaling that regulates hypocotyl growth in response to blue light. Modulates temperature-dependent growth and physiology maintenance, especially at warm ambient temperatures (e.g. 27 degrees Celsius) and in white light and low-light conditions, via HFR1-dependent activity; this process requires PTAC12/HMR/PAP5 (transcriptional transactivator). In terms of biological role, implicated in promoting R protein-mediated resistance to Pseudomonas syringae pv. tomato (Pst.) DC3000 under continuous light conditions. Promotes systemic acquired resistance (SAR) and PR gene expression triggered by P.syringae. This is Cryptochrome-1 from Arabidopsis thaliana (Mouse-ear cress).